Consider the following 454-residue polypeptide: Bifunctional protein GlmU (454 aa).

The tract at residues 1–226 (MALNVVILAA…AVEVEGANNR (226 aa)) is pyrophosphorylase. Residues 8–11 (LAAG), Lys22, Gln73, 78–79 (GT), 100–102 (YGD), Gly137, Glu151, Asn166, and Asn224 each bind UDP-N-acetyl-alpha-D-glucosamine. Asp102 serves as a coordination point for Mg(2+). A Mg(2+)-binding site is contributed by Asn224. The tract at residues 227 to 247 (VQLAQLERAYQARAAEKLMLE) is linker. Positions 248–454 (GANLRDPARI…GWPRPVKLKK (207 aa)) are N-acetyltransferase. UDP-N-acetyl-alpha-D-glucosamine is bound by residues Arg330 and Lys348. The active-site Proton acceptor is the His360. Residues Tyr363 and Asn374 each contribute to the UDP-N-acetyl-alpha-D-glucosamine site. Acetyl-CoA is bound by residues Ala377, 383-384 (NY), Ser402, Ala420, and Arg437.

This sequence in the N-terminal section; belongs to the N-acetylglucosamine-1-phosphate uridyltransferase family. It in the C-terminal section; belongs to the transferase hexapeptide repeat family. Homotrimer. Mg(2+) serves as cofactor.

The protein localises to the cytoplasm. The enzyme catalyses alpha-D-glucosamine 1-phosphate + acetyl-CoA = N-acetyl-alpha-D-glucosamine 1-phosphate + CoA + H(+). It carries out the reaction N-acetyl-alpha-D-glucosamine 1-phosphate + UTP + H(+) = UDP-N-acetyl-alpha-D-glucosamine + diphosphate. It functions in the pathway nucleotide-sugar biosynthesis; UDP-N-acetyl-alpha-D-glucosamine biosynthesis; N-acetyl-alpha-D-glucosamine 1-phosphate from alpha-D-glucosamine 6-phosphate (route II): step 2/2. Its pathway is nucleotide-sugar biosynthesis; UDP-N-acetyl-alpha-D-glucosamine biosynthesis; UDP-N-acetyl-alpha-D-glucosamine from N-acetyl-alpha-D-glucosamine 1-phosphate: step 1/1. It participates in bacterial outer membrane biogenesis; LPS lipid A biosynthesis. Catalyzes the last two sequential reactions in the de novo biosynthetic pathway for UDP-N-acetylglucosamine (UDP-GlcNAc). The C-terminal domain catalyzes the transfer of acetyl group from acetyl coenzyme A to glucosamine-1-phosphate (GlcN-1-P) to produce N-acetylglucosamine-1-phosphate (GlcNAc-1-P), which is converted into UDP-GlcNAc by the transfer of uridine 5-monophosphate (from uridine 5-triphosphate), a reaction catalyzed by the N-terminal domain. The chain is Bifunctional protein GlmU from Shewanella pealeana (strain ATCC 700345 / ANG-SQ1).